The sequence spans 334 residues: N-acetyl-gamma-glutamyl-phosphate reductase (334 aa).

C154 is a catalytic residue.

The protein belongs to the NAGSA dehydrogenase family. Type 1 subfamily.

It is found in the cytoplasm. The catalysed reaction is N-acetyl-L-glutamate 5-semialdehyde + phosphate + NADP(+) = N-acetyl-L-glutamyl 5-phosphate + NADPH + H(+). Its pathway is amino-acid biosynthesis; L-arginine biosynthesis; N(2)-acetyl-L-ornithine from L-glutamate: step 3/4. Functionally, catalyzes the NADPH-dependent reduction of N-acetyl-5-glutamyl phosphate to yield N-acetyl-L-glutamate 5-semialdehyde. The polypeptide is N-acetyl-gamma-glutamyl-phosphate reductase (Escherichia coli O6:H1 (strain CFT073 / ATCC 700928 / UPEC)).